A 112-amino-acid chain; its full sequence is U15-hexatoxin-Hi1a (112 aa).

The first 18 residues, 1–18, serve as a signal peptide directing secretion; the sequence is MNTLIAFAVLLLLSTTLG. Positions 19–73 are excised as a propeptide; sequence DTDDKVSHEEIQERKELSGISEELLLQQLEAVEAALMEKERLEEMEEDGNSREKR. 3 disulfide bridges follow: C74–C88, C81–C93, and C87–C107.

This sequence belongs to the neurotoxin 14 (magi-1) family. 08 (Ltx-4) subfamily. As to expression, expressed by the venom gland.

Its subcellular location is the secreted. Its function is as follows. Probable ion channel inhibitor. This chain is U15-hexatoxin-Hi1a, found in Hadronyche infensa (Fraser island funnel-web spider).